The primary structure comprises 220 residues: MASKFQNRLVGTIVLVALGVIVLPGLLDGQKKHYQDEFAAIPLVPKAGDRDEPDMMPAATQALPTQPPEGAAEEVRAGDAAAPSLDPATIAANNTEFEPEPAPVAPPKPKPVEPPKPKVEAPPAPKPEPKPVVEEKAAPTGKAYVVQLGALKNADKVNEIVGKLRGAGYRVYTSPSTPVQGKITRILVGPDASKDKLKGSLGELKQLSGLSGVVMGYTPN.

The chain crosses the membrane as a helical span at residues 9–29; it reads LVGTIVLVALGVIVLPGLLDG. Disordered stretches follow at residues 46–84 and 97–137; these read KAGD…AAPS and FEPE…EEKA. A compositionally biased stretch (low complexity) spans 57–70; sequence PAATQALPTQPPEG. Positions 100 to 109 are enriched in pro residues; the sequence is EPAPVAPPKP. 2 stretches are compositionally biased toward basic and acidic residues: residues 110 to 119 and 127 to 137; these read KPVEPPKPKV and PEPKPVVEEKA. Positions 138–217 constitute an SPOR domain; that stretch reads APTGKAYVVQ…SGLSGVVMGY (80 aa).

It belongs to the DedD family.

Its subcellular location is the cell inner membrane. Non-essential cell division protein that could be required for efficient cell constriction. The protein is Cell division protein DedD of Escherichia coli (strain K12).